A 331-amino-acid chain; its full sequence is uncharacterized protein (331 aa).

4 WD repeats span residues 53-92 (KAHTNITGIISCDQLNGVITCGSEGEIHLWDIRSQAKSAV), 97-139 (QQST…KLIR), 144-184 (AHND…DSTD), and 300-331 (ASEEICRAISFDVKNDVYYSGGEDGLLQAFRV).

The protein resides in the cytoplasm. It is found in the nucleus. This is an uncharacterized protein from Schizosaccharomyces pombe (strain 972 / ATCC 24843) (Fission yeast).